Reading from the N-terminus, the 106-residue chain is Translation initiation factor 1A 2 (106 aa).

Residues 1-24 (MRKRREGTANNSPTPEVTRVRTPR) are disordered. Positions 18–92 (TRVRTPRKEN…SKADVIWKYT (75 aa)) constitute an S1-like domain.

This sequence belongs to the eIF-1A family.

Its function is as follows. Seems to be required for maximal rate of protein biosynthesis. Enhances ribosome dissociation into subunits and stabilizes the binding of the initiator Met-tRNA(I) to 40 S ribosomal subunits. The polypeptide is Translation initiation factor 1A 2 (eIF1A2) (Methanosarcina mazei (strain ATCC BAA-159 / DSM 3647 / Goe1 / Go1 / JCM 11833 / OCM 88) (Methanosarcina frisia)).